The primary structure comprises 124 residues: Group 1 truncated hemoglobin GlbN (124 aa).

3 residues coordinate heme: His46, His70, and His117.

The protein belongs to the truncated hemoglobin family. Group I subfamily. Monomer. Heme serves as cofactor.

Functionally, forms a very stable complex with oxygen. The oxygen dissociation rate is 0.011 sec(-1). In Synechocystis sp. (strain ATCC 27184 / PCC 6803 / Kazusa), this protein is Group 1 truncated hemoglobin GlbN (glbN).